Here is a 377-residue protein sequence, read N- to C-terminus: Probable staphylococcal-like nuclease CAN3 (377 aa).

Gly2 is lipidated: N-myristoyl glycine. Cys7 is lipidated: S-palmitoyl cysteine. The segment at 15 to 57 is disordered; sequence GDHYPYYKPTSRPHYQPPHYHGQPAAPPAPPQQQPLGPHGVTP. Over residues 27 to 38 the composition is skewed to low complexity; that stretch reads PHYQPPHYHGQP. The TNase-like domain occupies 177 to 353; it reads NTLPVYDKCI…KAANRGLWAS (177 aa). Asp190 is a binding site for Ca(2+). The active site involves Arg260. Asp265 contributes to the Ca(2+) binding site. Catalysis depends on residues Glu268 and Arg302.

The protein belongs to the thermonuclease family. Requires Ca(2+) as cofactor.

It localises to the cell membrane. Functionally, enzyme that catalyzes the hydrolysis of both DNA and RNA at the 5' position of the phosphodiester bond. This is Probable staphylococcal-like nuclease CAN3 from Oryza sativa subsp. japonica (Rice).